The sequence spans 461 residues: Photosystem II CP43 reaction center protein (461 aa).

Positions 1 to 2 are excised as a propeptide; it reads ME. Thr-3 carries the post-translational modification N-acetylthreonine. Thr-3 is modified (phosphothreonine). 5 helical membrane-spanning segments follow: residues 57–81, 122–143, 166–188, 243–263, and 279–300; these read LFEVAHFVPQKPMYEQGLILLPHLA, LAGPDTLEESFRFFGYTWKRKK, KAMYGGGVYDTWWPGGGDVRSIT, RPSPWVVRTFVWSGEAYLSYS, and WFNNTVYPSEFYGPTGPEASQA. Residue Glu-355 coordinates [CaMn4O5] cluster. The chain crosses the membrane as a helical span at residues 435-459; sequence RARAAAIGFEKGIDRSREIARKLKP.

This sequence belongs to the PsbB/PsbC family. PsbC subfamily. PSII is composed of 1 copy each of membrane proteins PsbA, PsbB, PsbC, PsbD, PsbE, PsbF, PsbH, PsbI, PsbJ, PsbK, PsbL, PsbM, PsbT, PsbY, PsbZ, Psb30/Ycf12, at least 3 peripheral proteins of the oxygen-evolving complex and a large number of cofactors. It forms dimeric complexes. It depends on Binds multiple chlorophylls and provides some of the ligands for the Ca-4Mn-5O cluster of the oxygen-evolving complex. It may also provide a ligand for a Cl- that is required for oxygen evolution. PSII binds additional chlorophylls, carotenoids and specific lipids. as a cofactor.

It is found in the plastid. The protein localises to the chloroplast thylakoid membrane. Functionally, one of the components of the core complex of photosystem II (PSII). It binds chlorophyll and helps catalyze the primary light-induced photochemical processes of PSII. PSII is a light-driven water:plastoquinone oxidoreductase, using light energy to abstract electrons from H(2)O, generating O(2) and a proton gradient subsequently used for ATP formation. This Euglena gracilis protein is Photosystem II CP43 reaction center protein.